The following is a 622-amino-acid chain: Chaperone protein HscA homolog (622 aa).

This sequence belongs to the heat shock protein 70 family.

In terms of biological role, chaperone involved in the maturation of iron-sulfur cluster-containing proteins. Has a low intrinsic ATPase activity which is markedly stimulated by HscB. This chain is Chaperone protein HscA homolog, found in Aromatoleum aromaticum (strain DSM 19018 / LMG 30748 / EbN1) (Azoarcus sp. (strain EbN1)).